The chain runs to 111 residues: UPF0122 protein LACR_1522 (111 aa).

Belongs to the UPF0122 family.

In terms of biological role, might take part in the signal recognition particle (SRP) pathway. This is inferred from the conservation of its genetic proximity to ftsY/ffh. May be a regulatory protein. This chain is UPF0122 protein LACR_1522, found in Lactococcus lactis subsp. cremoris (strain SK11).